The primary structure comprises 209 residues: Outer-membrane lipoprotein carrier protein (209 aa).

The signal sequence occupies residues 1–23 (MKNLLKKSLLGLAFLSLNGFAFA).

This sequence belongs to the LolA family. In terms of assembly, monomer.

The protein localises to the periplasm. Its function is as follows. Participates in the translocation of lipoproteins from the inner membrane to the outer membrane. Only forms a complex with a lipoprotein if the residue after the N-terminal Cys is not an aspartate (The Asp acts as a targeting signal to indicate that the lipoprotein should stay in the inner membrane). The protein is Outer-membrane lipoprotein carrier protein of Glaesserella parasuis serovar 5 (strain SH0165) (Haemophilus parasuis).